Reading from the N-terminus, the 260-residue chain is Taurine import ATP-binding protein TauB (260 aa).

The ABC transporter domain maps to 6 to 235; that stretch reads AQQVSVVYAS…RYAHGEPVRS (230 aa). ATP is bound at residue 40–47; the sequence is GASGCGKS.

It belongs to the ABC transporter superfamily. Taurine importer (TC 3.A.1.17.1) family. As to quaternary structure, the complex is composed of two ATP-binding proteins (TauB), two transmembrane proteins (TauC) and a solute-binding protein (TauA).

It is found in the cell inner membrane. It carries out the reaction taurine(out) + ATP + H2O = taurine(in) + ADP + phosphate + H(+). In terms of biological role, part of the ABC transporter complex TauABC involved in taurine import. Responsible for energy coupling to the transport system. This chain is Taurine import ATP-binding protein TauB, found in Burkholderia pseudomallei (strain K96243).